The chain runs to 355 residues: Elongation factor Ts, mitochondrial (355 aa).

Residues 1-46 (MIRSLNFALRNCNKNILINSNKITINNGLLLKKNNFCTQSTSEVKV) constitute a mitochondrion transit peptide.

Belongs to the EF-Ts family.

It is found in the mitochondrion. In terms of biological role, associates with the EF-Tu.GDP complex and induces the exchange of GDP to GTP. It remains bound to the aminoacyl-tRNA.EF-Tu.GTP complex up to the GTP hydrolysis stage on the ribosome. The sequence is that of Elongation factor Ts, mitochondrial (tsfm) from Dictyostelium discoideum (Social amoeba).